A 559-amino-acid polypeptide reads, in one-letter code: MSSEVIRGTAEMVLAELYVSDREGNDATGDGTKEKPFKTGLKALMTVGKEPFPTIYVDSQKENERWDVISKSQMKNIKKMWHREQMKNDSREKKEAEDNLRREKNLEEAKKIIIKNDPSLPEPACVKISALEGYRGQRVKVFGWVHRLRRQGKNLMFLVLRDGTGYLQCVLSDDLCQCYNGVVLSTESSVAVYGTLNLTPKGKQAPGGHELSCDFWELVGLAPAGGADNLINEESDVDVQLNNRHMMIRGENMSKILKARSMITRCFRDHFFDRGYCEVTTPTLVQTQVEGGATLFKLDYFGEEAFLTQSSQLYLETCLPALGDVFCIAQSYRAEQSRTRRHLAEFTHVEAECPFLTFEDLLNRLEDLVCDVVDRVLKSPVASIVYELNPNFKPPKRPFRRMNYSDAIEWLKEHDVKKEDGTFYEFGDDIPEAPERLMTDTINEPILLCRFPVEIKSFYMQRCPEDPRLTESVDVLMPNVGEIVGGSMRSWDSEEILEGYKREGIDPAPYYWYTDQRKYGTCPHGGYGLGLERFLSWILNRYHIRDVCLYPRFLQRCRP.

S72 bears the Phosphoserine mark. Positions 82-102 (HREQMKNDSREKKEAEDNLRR) are disordered. K255 carries the N6-acetyllysine modification. The residue at position 493 (S493) is a Phosphoserine. K501 is subject to N6-acetyllysine.

The protein belongs to the class-II aminoacyl-tRNA synthetase family. Homodimer.

The protein localises to the cytoplasm. The enzyme catalyses tRNA(Asn) + L-asparagine + ATP = L-asparaginyl-tRNA(Asn) + AMP + diphosphate + H(+). Its function is as follows. Catalyzes the attachment of asparagine to tRNA(Asn) in a two-step reaction: asparagine is first activated by ATP to form Asn-AMP and then transferred to the acceptor end of tRNA(Asn). In addition to its essential role in protein synthesis, acts as a signaling molecule that induced migration of CCR3-expressing cells. Has an essential role in the development of the cerebral cortex, being required for proper proliferation of radial glial cells. This is Asparagine--tRNA ligase, cytoplasmic from Mus musculus (Mouse).